Consider the following 330-residue polypeptide: Endochitinase Ziz m 1.0101 (330 aa).

The N-terminal stretch at Met1 to Ala24 is a signal peptide. The GH18 domain maps to Gly26–Ala330. 3 disulfide bridges follow: Cys47–Cys90, Cys77–Cys80, and Cys187–Cys219. Positions Asn72–Glu86 are binds to IgE in 70% of the 10 patients tested allergic to Indian jujube and latex. A binds to IgE in 100% of the 10 patients tested allergic to Indian jujube and latex; sufficient for prediction of the presence of allergic reactions in these patients region spans residues Val292–Thr301. 2 binds to IgE in 70% of the 10 patients tested allergic to Indian jujube and latex regions span residues Lys300 to Tyr311 and Leu309 to Pro320.

It belongs to the glycosyl hydrolase 18 family. Chitinase class II subfamily.

Its subcellular location is the secreted. It carries out the reaction Random endo-hydrolysis of N-acetyl-beta-D-glucosaminide (1-&gt;4)-beta-linkages in chitin and chitodextrins.. Functionally, defense against chitin containing fungal pathogens. This Ziziphus mauritiana (Indian jujube) protein is Endochitinase Ziz m 1.0101.